We begin with the raw amino-acid sequence, 466 residues long: Protein tilB homolog (466 aa).

4 LRR repeats span residues 22–43 (SLEELSLHQQEIERLEHIDKWC), 45–66 (DLKILYLQNNLIGKIENVSKLK), 67–88 (KLEYLNLALNNIEKIENLEGCE), and 89–110 (ELAKLDLTVNFIGELSSIKTLK). In terms of domain architecture, LRRCT spans 123–161 (NPCAFFDHYREFVVATLPQLKWLDGKGIEPSERIKALQE). Residues 178–204 (LKRAKLKEEAQRKHQEEDKNEDKRSNA) adopt a coiled-coil conformation. Composition is skewed to basic and acidic residues over residues 185–202 (EEAQRKHQEEDKNEDKRS) and 269–279 (EKQRKNQEKLS). Disordered stretches follow at residues 185–206 (EEAQRKHQEEDKNEDKRSNAGF) and 269–288 (EKQRKNQEKLSERKKKVKPP). Positions 301 to 396 (VNEPKIDFSL…GGQRAFTSVK (96 aa)) constitute a CS domain. The disordered stretch occupies residues 418-466 (VDPSKHSFPDVTNIVQGKKHTPRRRPEPKIIPSEEDPTFEDNPEVPPLI). The span at 450–460 (SEEDPTFEDNP) shows a compositional bias: acidic residues.

This sequence belongs to the tilB family. As to quaternary structure, interacts (via CS domain) with ZMYND10 (via C-terminus).

Its subcellular location is the cytoplasm. The protein localises to the cell projection. It localises to the cilium. Its function is as follows. May play a role in dynein arm assembly, hence essential for proper axoneme building for cilia motility. In Macaca fascicularis (Crab-eating macaque), this protein is Protein tilB homolog (LRCC6).